Here is a 309-residue protein sequence, read N- to C-terminus: Mitochondrial phosphate carrier protein 1, mitochondrial (309 aa).

The Mitochondrial intermembrane segment spans residues 1–15; it reads MTRVKSKLDEELSSP. A helical membrane pass occupies residues 16-36; sequence WFYTVCTMGGMLSAGTTHLAI. Solcar repeat units follow at residues 16-100, 109-193, and 210-289; these read WFYT…FKTL, NRTS…SVEF, and QQLG…IKVL. Residues 37 to 74 are Mitochondrial matrix-facing; sequence TPLDVLKVNMQVNPVKYNSIPSGFSTLLREHGHSYLWR. A helical transmembrane segment spans residues 75–94; it reads GWSGKLLGYGVQGGCRFGLY. The Mitochondrial intermembrane segment spans residues 95–111; it reads EYFKTLYSDVLPNHNRT. Residues 112–132 traverse the membrane as a helical segment; sequence SIYFLSSASAQIFADMALCPF. At 133 to 167 the chain is on the mitochondrial matrix side; that stretch reads EAIKVRVQTQPMFAKGLLDGFPRVYRSEGLAGFHR. Residues 168 to 187 form a helical membrane-spanning segment; the sequence is GLFPLWCRNLPFSMVMFSTF. Residues 188-208 lie on the Mitochondrial intermembrane side of the membrane; it reads EQSVEFIYQKIIQKRKQDCSK. A helical transmembrane segment spans residues 209-229; it reads AQQLGVTCLAGYTAGAVGTII. Over 230–268 the chain is Mitochondrial matrix; it reads SNPADVVLSSLYNNKAKNVLQAVRNIGFVGLFTRSLPVR. A helical membrane pass occupies residues 269-289; sequence ITIVGPVITLQWFFYDAIKVL. Residues 290-309 are Mitochondrial intermembrane-facing; that stretch reads SGFPTSGGVKKPVDAAKLSV.

Belongs to the mitochondrial carrier (TC 2.A.29) family. Expressed in stems, leaves and flowers. Strong expression in the stamens of flowers.

The protein resides in the mitochondrion inner membrane. Transport of phosphate groups from the cytosol to the mitochondrial matrix. Mediates salt stress tolerance through an ATP-dependent pathway and via modulation of the gibberellin metabolism. The sequence is that of Mitochondrial phosphate carrier protein 1, mitochondrial (MPT1) from Arabidopsis thaliana (Mouse-ear cress).